The primary structure comprises 244 residues: tRNA (guanine-N(1)-)-methyltransferase (244 aa).

S-adenosyl-L-methionine contacts are provided by residues Gly-112 and 131-136 (IGDFIV).

It belongs to the RNA methyltransferase TrmD family. As to quaternary structure, homodimer.

It is found in the cytoplasm. The enzyme catalyses guanosine(37) in tRNA + S-adenosyl-L-methionine = N(1)-methylguanosine(37) in tRNA + S-adenosyl-L-homocysteine + H(+). Functionally, specifically methylates guanosine-37 in various tRNAs. The chain is tRNA (guanine-N(1)-)-methyltransferase from Clostridium kluyveri (strain NBRC 12016).